A 293-amino-acid chain; its full sequence is Small ribosomal subunit protein uS3 (293 aa).

The KH type-2 domain occupies I39–K110.

Belongs to the universal ribosomal protein uS3 family. Part of the 30S ribosomal subunit. Forms a tight complex with proteins S10 and S14.

In terms of biological role, binds the lower part of the 30S subunit head. Binds mRNA in the 70S ribosome, positioning it for translation. This is Small ribosomal subunit protein uS3 from Borreliella burgdorferi (strain ATCC 35210 / DSM 4680 / CIP 102532 / B31) (Borrelia burgdorferi).